The following is a 294-amino-acid chain: Proline iminopeptidase (294 aa).

The AB hydrolase-1 domain occupies 27–277 (PPLVLLHGGP…GCGHMSFVEK (251 aa)). S105 serves as the catalytic Nucleophile. Residue D244 is part of the active site. H271 serves as the catalytic Proton donor.

The protein belongs to the peptidase S33 family.

Its subcellular location is the cell envelope. The enzyme catalyses Release of N-terminal proline from a peptide.. Releases the N-terminal proline from various substrates. The chain is Proline iminopeptidase from Lactobacillus helveticus (strain DPC 4571).